A 253-amino-acid polypeptide reads, in one-letter code: N-acetylglucosaminyl-phosphatidylinositol de-N-acetylase (253 aa).

Residues 3–23 traverse the membrane as a helical segment; that stretch reads VAAPLLCLAAAVLVWGVLWVW. The Cytoplasmic segment spans residues 24–253; that stretch reads GSWERMTRPE…YMRINSLNFL (230 aa).

Belongs to the PIGL family.

Its subcellular location is the endoplasmic reticulum membrane. The enzyme catalyses a 6-(N-acetyl-alpha-D-glucosaminyl)-1-(1,2-diacyl-sn-glycero-3-phospho)-1D-myo-inositol + H2O = a 6-(alpha-D-glucosaminyl)-1-(1,2-diacyl-sn-glycero-3-phospho)-1D-myo-inositol + acetate. Its pathway is glycolipid biosynthesis; glycosylphosphatidylinositol-anchor biosynthesis. In terms of biological role, catalyzes the second step of glycosylphosphatidylinositol (GPI) biosynthesis, which is the de-N-acetylation of N-acetylglucosaminyl-phosphatidylinositol. The sequence is that of N-acetylglucosaminyl-phosphatidylinositol de-N-acetylase (PIGL) from Bos taurus (Bovine).